Consider the following 320-residue polypeptide: o-succinylbenzoate synthase (320 aa).

Lys133 functions as the Proton donor in the catalytic mechanism. Positions 161, 190, and 213 each coordinate Mg(2+). The active-site Proton acceptor is the Lys235.

This sequence belongs to the mandelate racemase/muconate lactonizing enzyme family. MenC type 1 subfamily. It depends on a divalent metal cation as a cofactor.

The catalysed reaction is (1R,6R)-6-hydroxy-2-succinyl-cyclohexa-2,4-diene-1-carboxylate = 2-succinylbenzoate + H2O. The protein operates within quinol/quinone metabolism; 1,4-dihydroxy-2-naphthoate biosynthesis; 1,4-dihydroxy-2-naphthoate from chorismate: step 4/7. It functions in the pathway quinol/quinone metabolism; menaquinone biosynthesis. In terms of biological role, converts 2-succinyl-6-hydroxy-2,4-cyclohexadiene-1-carboxylate (SHCHC) to 2-succinylbenzoate (OSB). This Escherichia coli O7:K1 (strain IAI39 / ExPEC) protein is o-succinylbenzoate synthase.